We begin with the raw amino-acid sequence, 4743 residues long: Apolipoprotein B-100 (4743 aa).

Residues 1 to 27 (MGPQRPALRAPLLLLFLLLFLDTSVWA) form the signal peptide. The segment at 29-113 (DATRFKHLRK…KNSEEFASAM (85 aa)) is heparin-binding. The 628-residue stretch at 33–660 (FKHLRKYVYS…PSSYLPKESM (628 aa)) folds into the Vitellogenin domain. C65 and C84 are disulfide-bonded. The N-linked (GlcNAc...) asparagine glycan is linked to N172. 4 disulfide bridges follow: C173–C199, C232–C248, C372–C377, and C466–C501. The segment at 219-293 (VRPLSTLISS…RFFRGGINQV (75 aa)) is heparin-binding. The interval 890–947 (NTNFFHESGLEARVALKAGQLKVIIPSPKRPVKLFSGSNTLHLVSTTKTEVIPPLIEN) is heparin-binding. C954 and C964 form a disulfide bridge. 4 N-linked (GlcNAc...) asparagine glycosylation sites follow: N971, N1336, N1345, and N1491. An N6-acetyllysine modification is found at K1973. Phosphoserine is present on S2006. A heparin-binding region spans residues 2010–2145 (NDAFDEPREF…EKLSQLETYA (136 aa)). N-linked (GlcNAc...) asparagine glycosylation is found at N2094, N2522, N2662, N2741, N2791, N2897, N2944, and N3063. The tract at residues 3123-3198 (FLKTTKQSFD…KIKFDKYKTE (76 aa)) is heparin-binding. Residues 3136 to 3146 (KAQYKKNRDKH) form a basic (possible receptor binding region) region. 3 N-linked (GlcNAc...) asparagine glycosylation sites follow: N3186, N3299, and N3321. The segment at 3336–3356 (VTDALQYKLEGTSRLMRKKVL) is LDL receptor binding. A heparin-binding region spans residues 3346–3479 (GTSRLMRKKV…QEYSGSVANE (134 aa)). The segment at 3349–3357 (RLMRKKVLK) is basic (possible receptor binding region). N3428, N3715, and N3828 each carry an N-linked (GlcNAc...) asparagine glycan. Residue S3981 is modified to Phosphoserine. T3985 bears the Phosphothreonine mark. N-linked (GlcNAc...) asparagine glycosylation is found at N4203 and N4232.

As to quaternary structure, interacts with PCSK9. Interacts with MTTP. Interacts with AUP1. Interacts with CIDEB. Post-translationally, palmitoylated; structural requirement for proper assembly of the hydrophobic core of the lipoprotein particle. In terms of tissue distribution, detected in intestine and liver (at protein level).

It is found in the cytoplasm. The protein resides in the secreted. Its subcellular location is the lipid droplet. In terms of biological role, apolipoprotein B is a major protein constituent of chylomicrons (apo B-48), LDL (apo B-100) and VLDL (apo B-100). Apo B-100 functions as a recognition signal for the cellular binding and internalization of LDL particles by the apoB/E receptor. The sequence is that of Apolipoprotein B-100 (Apob) from Rattus norvegicus (Rat).